A 506-amino-acid polypeptide reads, in one-letter code: 26S proteasome non-ATPase regulatory subunit 5 (506 aa).

Belongs to the proteasome subunit S5B/HSM3 family. As to quaternary structure, interacts with PI31; this interaction is increased by PI31 ADP-ribosylation. Interacts with Rpt2.

In terms of biological role, acts as a chaperone during the assembly of the 26S proteasome. This is 26S proteasome non-ATPase regulatory subunit 5 from Drosophila melanogaster (Fruit fly).